A 370-amino-acid polypeptide reads, in one-letter code: Platelet-derived growth factor D (370 aa).

Residues 1–18 (MHRLIFVYTLICANFCSC) form the signal peptide. A CUB domain is found at 52 to 170 (RDETIQVKGN…PGFKIYYSLL (119 aa)). A disulfide bond links C109 and C131. The N-linked (GlcNAc...) asparagine glycan is linked to N276. Disulfide bonds link C302/C360 and C306/C362.

It belongs to the PDGF/VEGF growth factor family. Homodimer; disulfide-linked. Interacts with PDGFRB homodimers, and with heterodimers formed by PDGFRA and PDGFRB. Post-translationally, activated by proteolytic cleavage. Proteolytic removal of the N-terminal CUB domain releasing the core domain is necessary for unmasking the receptor-binding epitopes of the core domain. Cleavage after Arg-247 or Arg-249 by urokinase plasminogen activator gives rise to the active form. Expressed at high levels in the heart, pancreas, adrenal gland and ovary and at low levels in placenta, liver, kidney, prostate, testis, small intestine, spleen and colon. In the kidney, expressed by the visceral epithelial cells of the glomeruli. A widespread expression is also seen in the medial smooth muscle cells of arteries and arterioles, as well as in smooth muscle cells of vasa rectae in the medullary area. Expressed in the adventitial connective tissue surrounding the suprarenal artery. In chronic obstructive nephropathy, a persistent expression is seen in glomerular visceral epithelial cells and vascular smooth muscle cells, as well as de novo expression by periglomerular interstitial cells and by some neointimal cells of atherosclerotic vessels. Expression in normal prostate is seen preferentially in the mesenchyme of the gland while expression is increased and more profuse in prostate carcinoma. Expressed in many ovarian, lung, renal and brain cancer-derived cell lines.

The protein resides in the secreted. Its function is as follows. Growth factor that plays an essential role in the regulation of embryonic development, cell proliferation, cell migration, survival and chemotaxis. Potent mitogen for cells of mesenchymal origin. Plays an important role in wound healing. Induces macrophage recruitment, increased interstitial pressure, and blood vessel maturation during angiogenesis. Can initiate events that lead to a mesangial proliferative glomerulonephritis, including influx of monocytes and macrophages and production of extracellular matrix. This Homo sapiens (Human) protein is Platelet-derived growth factor D (PDGFD).